Reading from the N-terminus, the 229-residue chain is Juvenile hormone-binding protein (229 aa).

A signal peptide spans 1–3 (VLS).

It is found in the secreted. Its function is as follows. Prevents juvenile hormone from being hydrolyzed by general esterases by combining with it specifically. The chain is Juvenile hormone-binding protein (JHBP) from Manduca sexta (Tobacco hawkmoth).